The chain runs to 391 residues: Galactokinase (391 aa).

34–37 (EHTD) is a substrate binding site. 121-127 (GAGLSSS) contributes to the ATP binding site. Positions 127 and 159 each coordinate Mg(2+). Asp171 (proton acceptor) is an active-site residue. Tyr220 lines the substrate pocket.

The protein belongs to the GHMP kinase family. GalK subfamily.

The protein localises to the cytoplasm. It carries out the reaction alpha-D-galactose + ATP = alpha-D-galactose 1-phosphate + ADP + H(+). It participates in carbohydrate metabolism; galactose metabolism. Functionally, catalyzes the transfer of the gamma-phosphate of ATP to D-galactose to form alpha-D-galactose-1-phosphate (Gal-1-P). This chain is Galactokinase, found in Roseiflexus sp. (strain RS-1).